A 251-amino-acid chain; its full sequence is DNA-directed RNA polymerase III subunit RPC7 (251 aa).

Residues 186–251 (DDASTGDGAA…EEDPNEEAAF (66 aa)) are disordered. The residue at position 189 (Ser-189) is a Phosphoserine. 2 stretches are compositionally biased toward acidic residues: residues 203 to 225 (GEDDDLADDDFEEDEDEEDDDDY) and 234 to 251 (GDDDDYGDEEDPNEEAAF).

This sequence belongs to the eukaryotic RPC7 RNA polymerase subunit family. Component of the RNA polymerase III (Pol III) complex consisting of 17 subunits.

Its subcellular location is the nucleus. In terms of biological role, DNA-dependent RNA polymerase catalyzes the transcription of DNA into RNA using the four ribonucleoside triphosphates as substrates. Specific peripheric component of RNA polymerase III which synthesizes small RNAs, such as 5S rRNA and tRNAs. C31 is involved in the formation of the initiation complex. The sequence is that of DNA-directed RNA polymerase III subunit RPC7 (RPC31) from Saccharomyces cerevisiae (strain ATCC 204508 / S288c) (Baker's yeast).